Reading from the N-terminus, the 367-residue chain is tRNA-specific 2-thiouridylase MnmA (367 aa).

ATP is bound by residues 13–20 (GLSGGVDS) and methionine 39. The tract at residues 99 to 101 (NPD) is interaction with target base in tRNA. Cysteine 104 functions as the Nucleophile in the catalytic mechanism. Cysteine 104 and cysteine 200 are oxidised to a cystine. Glycine 128 lines the ATP pocket. The segment at 150–152 (KDQ) is interaction with tRNA. Cysteine 200 serves as the catalytic Cysteine persulfide intermediate. Residues 307–308 (RY) are interaction with tRNA.

It belongs to the MnmA/TRMU family.

It localises to the cytoplasm. It carries out the reaction S-sulfanyl-L-cysteinyl-[protein] + uridine(34) in tRNA + AH2 + ATP = 2-thiouridine(34) in tRNA + L-cysteinyl-[protein] + A + AMP + diphosphate + H(+). Functionally, catalyzes the 2-thiolation of uridine at the wobble position (U34) of tRNA, leading to the formation of s(2)U34. The protein is tRNA-specific 2-thiouridylase MnmA of Neisseria meningitidis serogroup C / serotype 2a (strain ATCC 700532 / DSM 15464 / FAM18).